A 597-amino-acid polypeptide reads, in one-letter code: Elongation factor 4 (597 aa).

The region spanning 2–184 is the tr-type G domain; the sequence is QHIRNFSIIA…TIVARVPAPQ (183 aa). GTP-binding positions include 14–19 and 131–134; these read DHGKST and NKMD.

Belongs to the TRAFAC class translation factor GTPase superfamily. Classic translation factor GTPase family. LepA subfamily.

It localises to the cell inner membrane. It carries out the reaction GTP + H2O = GDP + phosphate + H(+). Required for accurate and efficient protein synthesis under certain stress conditions. May act as a fidelity factor of the translation reaction, by catalyzing a one-codon backward translocation of tRNAs on improperly translocated ribosomes. Back-translocation proceeds from a post-translocation (POST) complex to a pre-translocation (PRE) complex, thus giving elongation factor G a second chance to translocate the tRNAs correctly. Binds to ribosomes in a GTP-dependent manner. The protein is Elongation factor 4 of Bordetella petrii (strain ATCC BAA-461 / DSM 12804 / CCUG 43448).